Reading from the N-terminus, the 228-residue chain is Large ribosomal subunit protein uL16 (228 aa).

The protein belongs to the universal ribosomal protein uL16 family. In terms of assembly, component of the small ribosomal subunit. Mature ribosomes consist of a small (40S) and a large (60S) subunit. The 40S subunit contains about 33 different proteins and 1 molecule of RNA (18S). The 60S subunit contains about 49 different proteins and 3 molecules of RNA (25S, 5.8S and 5S).

This Pinus taeda (Loblolly pine) protein is Large ribosomal subunit protein uL16 (RPL10).